The following is a 199-amino-acid chain: Peroxynitrite isomerase (199 aa).

The short motif at 21 to 27 (GEWEGRG) is the GXWXGXG element. Histidine 190 serves as a coordination point for heme b.

The protein belongs to the nitrobindin family. In terms of assembly, homodimer. The cofactor is heme b.

The enzyme catalyses peroxynitrite = nitrate. Its pathway is nitrogen metabolism. Functionally, heme-binding protein able to scavenge peroxynitrite and to protect free L-tyrosine against peroxynitrite-mediated nitration, by acting as a peroxynitrite isomerase that converts peroxynitrite to nitrate. Therefore, this protein likely plays a role in peroxynitrite sensing and in the detoxification of reactive nitrogen and oxygen species (RNS and ROS, respectively). Is able to bind nitric oxide (NO) in vitro, but may act as a sensor of peroxynitrite levels in vivo. The chain is Peroxynitrite isomerase from Paenarthrobacter aurescens (strain TC1).